The sequence spans 111 residues: UPF0060 membrane protein Cbei_2176 (111 aa).

4 helical membrane passes run 7–27, 33–53, 60–80, and 85–105; these read ILYF…IWIW, SYLY…IPTL, FGKV…LWGW, and IVPD…VIVI.

Belongs to the UPF0060 family.

It is found in the cell membrane. The protein is UPF0060 membrane protein Cbei_2176 of Clostridium beijerinckii (strain ATCC 51743 / NCIMB 8052) (Clostridium acetobutylicum).